Reading from the N-terminus, the 242-residue chain is Demethylmenaquinone methyltransferase (242 aa).

2 residues coordinate S-adenosyl-L-methionine: threonine 74 and aspartate 93.

The protein belongs to the class I-like SAM-binding methyltransferase superfamily. MenG/UbiE family.

It catalyses the reaction a 2-demethylmenaquinol + S-adenosyl-L-methionine = a menaquinol + S-adenosyl-L-homocysteine + H(+). It functions in the pathway quinol/quinone metabolism; menaquinone biosynthesis; menaquinol from 1,4-dihydroxy-2-naphthoate: step 2/2. Functionally, methyltransferase required for the conversion of demethylmenaquinol (DMKH2) to menaquinol (MKH2). The sequence is that of Demethylmenaquinone methyltransferase from Chlorobaculum tepidum (strain ATCC 49652 / DSM 12025 / NBRC 103806 / TLS) (Chlorobium tepidum).